We begin with the raw amino-acid sequence, 245 residues long: Terpene cyclase esdpB (245 aa).

The next 7 membrane-spanning stretches (helical) occupy residues 19 to 39 (MVAS…VTTI), 48 to 68 (SGVT…FAVI), 75 to 95 (IAAL…YVSV), 112 to 132 (LPVV…ALSM), 140 to 160 (LYWG…GLLI), 177 to 197 (FIAS…WPSA), and 208 to 228 (WLSG…YHIS).

It belongs to the paxB family.

It localises to the membrane. Its pathway is secondary metabolite biosynthesis; terpenoid biosynthesis. Terpene cyclase; part of the cluster that mediates the biosynthesis of shearones, diterpenoid pyrones (DPs) which are structurally diverse meroterpenoids consisting of a diterpene linked by a pyrone, and which may exhibit a range of bioactivities. Within the pathway, esdpB takes part to the biosynthesis of the molecular scaffold by catalyzing the cyclization of the prenyl group initiated by protonation and ring-opening of the epoxide to produce the diterpenoid pyrone scaffold. The molecular scaffold is commonly biosynthesized by a series of enzymes including the non-reducing polyketide synthase (NR-PKS) esdpA that generates an alpha-pyrone; the prenyltransferase esdpC that attaches a geranylgeranyl pyrophosphate (GGPP) produced by the GGPP synthase (GGPPS) esdpD onto the pyrone unit; the FAD-dependent monooxygenase esdpE that converts an olefin on the diterpene unit into an epoxide; and the terpene cyclase esdpB that catalyzes the cyclization reactions to give the molecular backbone shearone A. In the modification steps, esdpF oxidizes the hydroxy group to a ketone at C-3 and esdpG then attaches hydroxy groups at both C-11 and C-12. After that, esdpI hydroxylates at C-20 and esdpH hydroxylates at C-6'. The ether bridge is generated by nucleophilic attack of the hydroxy group at C-20 to the carbonyl carbon at C-3. EsdpH can also functions prior to esdpI. The different combinations of these modification enzymes lead to the production of diverse shearone derivatives, shearone I being the end product of the pathway. The alpha-ketoglutarate-dependent dioxygenase esdpJ seems not to be involved in this pathway. The polypeptide is Terpene cyclase esdpB (Penicillium shearii (Eupenicillium shearii)).